We begin with the raw amino-acid sequence, 59 residues long: Large ribosomal subunit protein bL32 (59 aa).

Residues 1-59 form a disordered region; the sequence is MAVQQNKKSPSKRGMHRSHDALTAPALFVDSTTGEVHRPHHISPNGMYRGRKVVKAKGE. The span at 49–59 shows a compositional bias: basic residues; the sequence is RGRKVVKAKGE.

Belongs to the bacterial ribosomal protein bL32 family.

In Neisseria gonorrhoeae (strain ATCC 700825 / FA 1090), this protein is Large ribosomal subunit protein bL32.